We begin with the raw amino-acid sequence, 332 residues long: Holliday junction branch migration complex subunit RuvB (332 aa).

The segment at 1 to 181 (MSRILDNEIM…FGITGHMEYY (181 aa)) is large ATPase domain (RuvB-L). Residues leucine 20, arginine 21, glycine 62, lysine 65, threonine 66, threonine 67, 128-130 (EDF), arginine 171, tyrosine 181, and arginine 218 each bind ATP. Threonine 66 is a binding site for Mg(2+). The tract at residues 182–252 (AHADLTEIVE…ITDKALTMLD (71 aa)) is small ATPAse domain (RuvB-S). Positions 255-332 (HEGLDYVDQK…EHLGYEYNEK (78 aa)) are head domain (RuvB-H). Arginine 291, arginine 310, arginine 312, and arginine 315 together coordinate DNA.

This sequence belongs to the RuvB family. As to quaternary structure, homohexamer. Forms an RuvA(8)-RuvB(12)-Holliday junction (HJ) complex. HJ DNA is sandwiched between 2 RuvA tetramers; dsDNA enters through RuvA and exits via RuvB. An RuvB hexamer assembles on each DNA strand where it exits the tetramer. Each RuvB hexamer is contacted by two RuvA subunits (via domain III) on 2 adjacent RuvB subunits; this complex drives branch migration. In the full resolvosome a probable DNA-RuvA(4)-RuvB(12)-RuvC(2) complex forms which resolves the HJ.

The protein resides in the cytoplasm. It carries out the reaction ATP + H2O = ADP + phosphate + H(+). Functionally, the RuvA-RuvB-RuvC complex processes Holliday junction (HJ) DNA during genetic recombination and DNA repair, while the RuvA-RuvB complex plays an important role in the rescue of blocked DNA replication forks via replication fork reversal (RFR). RuvA specifically binds to HJ cruciform DNA, conferring on it an open structure. The RuvB hexamer acts as an ATP-dependent pump, pulling dsDNA into and through the RuvAB complex. RuvB forms 2 homohexamers on either side of HJ DNA bound by 1 or 2 RuvA tetramers; 4 subunits per hexamer contact DNA at a time. Coordinated motions by a converter formed by DNA-disengaged RuvB subunits stimulates ATP hydrolysis and nucleotide exchange. Immobilization of the converter enables RuvB to convert the ATP-contained energy into a lever motion, pulling 2 nucleotides of DNA out of the RuvA tetramer per ATP hydrolyzed, thus driving DNA branch migration. The RuvB motors rotate together with the DNA substrate, which together with the progressing nucleotide cycle form the mechanistic basis for DNA recombination by continuous HJ branch migration. Branch migration allows RuvC to scan DNA until it finds its consensus sequence, where it cleaves and resolves cruciform DNA. The protein is Holliday junction branch migration complex subunit RuvB of Streptococcus pneumoniae (strain CGSP14).